The following is a 207-amino-acid chain: MGQKINPLSFRLGINKLHHSSWFARPQSYTAILQEDKKIRDYIFTNLLRASISRIQINRQFNQVELQLHTSRPGVIIGRSGTGIDSLKRNVKNLLSKQSQLKINIIDVTNPDIDAVLLACFISQQLESRTTFKRAVRQAIQRAQKSDIPGIKIQVSGRLNGAEIARTEWIREGRVPLQTLKADLDYATSSAYTSFGVVGVKVWIFKG.

A KH type-2 domain is found at 39–109 (IRDYIFTNLL…QLKINIIDVT (71 aa)).

It belongs to the universal ribosomal protein uS3 family. Part of the 30S ribosomal subunit.

The protein resides in the plastid. The protein localises to the chloroplast. This chain is Small ribosomal subunit protein uS3c (rps3), found in Cyanidium caldarium (Red alga).